The following is a 584-amino-acid chain: ATP-dependent ubiquitin transferase-like protein Cap2 (584 aa).

The tract at residues 1–137 (MKQELHHTLL…SGTSNDVELE (137 aa)) is E2-like domain. Cysteine 90 serves as the catalytic For E2-like domain. The segment at 138–338 (GEFSAYWQSE…LLSRNQSRPD (201 aa)) is linker domain. The adenylation plus E1-like domain stretch occupies residues 339 to 584 (VGNLSQKRIA…RFSGCNICDE (246 aa)). Residue cysteine 522 is the For E1-like domain of the active site.

This sequence in the C-terminal section; belongs to the HesA/MoeB/ThiF family. Interacts with CD-NTase DncV in the presence and absence of phage T2. A Cap2 dimer is bound on either side by a DncV monomer.

Functionally, CD-NTase priming component of a CBASS antiviral system. CBASS (cyclic oligonucleotide-based antiphage signaling system) provides immunity against bacteriophages. The CD-NTase protein (DncV) synthesizes cyclic nucleotides in response to infection; these serve as specific second messenger signals. The signals activate a diverse range of effectors, leading to bacterial cell death and thus abortive phage infection. A type II-A(GA) CBASS system. In terms of biological role, primes DncV; acts as a protein transferase, conjugating DncV, the CD-NTase, to unidentified target(s) in the cell via an E1-E2 ubiquitin transferase-like mechanism. During the conjugation reaction DncV is probably transiently attached to AMP. Protein conjugation requires ATP. Its function is as follows. Protects E.coli against phage infection. When the CBASS operon (capV-dncV-cap2-cap3) is introduced in E.coli MG1655 there is about 100-fold protection against phages P1 and T2. When the operon is introduced in E.coli MG1655 there is a more than 10(3) decrease in the efficiency of T2 plaque formation. Protects 100-fold against phage T5, offers no protection against T7. When the operon is introduced in E.coli MG1655 it protects against phages T2, T4, T5 and T6. Another paper shows the operon confers protection against phages P1, T2, T5 and T6 but not T4 or lambda. The chain is ATP-dependent ubiquitin transferase-like protein Cap2 from Vibrio cholerae serotype O1 (strain ATCC 39315 / El Tor Inaba N16961).